The primary structure comprises 349 residues: Flap endonuclease 1 (349 aa).

Residues 1 to 102 (MGVTELGKLI…AEIEARRRVK (102 aa)) are N-domain. Mg(2+) contacts are provided by Asp31, Asp84, Glu156, Glu158, Asp177, Asp179, and Asp239. Residues 120–261 (DVAKYMKRVI…KALKLVLEFG (142 aa)) are I-domain.

The protein belongs to the XPG/RAD2 endonuclease family. FEN1 subfamily. As to quaternary structure, interacts with PCNA. PCNA stimulates the nuclease activity without altering cleavage specificity. Mg(2+) is required as a cofactor.

Functionally, structure-specific nuclease with 5'-flap endonuclease and 5'-3' exonuclease activities involved in DNA replication and repair. During DNA replication, cleaves the 5'-overhanging flap structure that is generated by displacement synthesis when DNA polymerase encounters the 5'-end of a downstream Okazaki fragment. Binds the unpaired 3'-DNA end and kinks the DNA to facilitate 5' cleavage specificity. Cleaves one nucleotide into the double-stranded DNA from the junction in flap DNA, leaving a nick for ligation. Also involved in the base excision repair (BER) pathway. Acts as a genome stabilization factor that prevents flaps from equilibrating into structures that lead to duplications and deletions. Also possesses 5'-3' exonuclease activity on nicked or gapped double-stranded DNA. The sequence is that of Flap endonuclease 1 from Pyrobaculum neutrophilum (strain DSM 2338 / JCM 9278 / NBRC 100436 / V24Sta) (Thermoproteus neutrophilus).